Consider the following 338-residue polypeptide: Phosphoribosylformylglycinamidine cyclo-ligase (338 aa).

Belongs to the AIR synthase family.

The protein localises to the cytoplasm. The enzyme catalyses 2-formamido-N(1)-(5-O-phospho-beta-D-ribosyl)acetamidine + ATP = 5-amino-1-(5-phospho-beta-D-ribosyl)imidazole + ADP + phosphate + H(+). The protein operates within purine metabolism; IMP biosynthesis via de novo pathway; 5-amino-1-(5-phospho-D-ribosyl)imidazole from N(2)-formyl-N(1)-(5-phospho-D-ribosyl)glycinamide: step 2/2. This is Phosphoribosylformylglycinamidine cyclo-ligase from Thermoplasma acidophilum (strain ATCC 25905 / DSM 1728 / JCM 9062 / NBRC 15155 / AMRC-C165).